Here is a 68-residue protein sequence, read N- to C-terminus: MDQVMAWVEPGKQFAKDSIRLVKRCTKPDRKEFQKIAVATAIGFAIMGFIGFFVKLIHIPINNIIVGS.

The Cytoplasmic portion of the chain corresponds to 1 to 32 (MDQVMAWVEPGKQFAKDSIRLVKRCTKPDRKE). Residues 33-61 (FQKIAVATAIGFAIMGFIGFFVKLIHIPI) form a helical membrane-spanning segment. Residues 62 to 68 (NNIIVGS) are Extracellular-facing.

It belongs to the SecE/SEC61-gamma family. In terms of assembly, heterotrimeric complex composed of SEC61-alpha, SEC61-beta and SEC61-gamma. Component of the ribosome-associated ER translocon complex.

Its subcellular location is the endoplasmic reticulum membrane. Functionally, necessary for protein translocation in the endoplasmic reticulum and multi-pass membrane protein biogenesis. This is Protein transport protein Sec61 subunit gamma (SEC61G) from Ciona intestinalis (Transparent sea squirt).